A 411-amino-acid polypeptide reads, in one-letter code: Bifunctional protein GlmU (411 aa).

Positions 1–204 are pyrophosphorylase; that stretch reads MDAVILCAGK…ENNIKGIKLN (204 aa). UTP contacts are provided by residues 6 to 9, Q74, and G79; that span reads LCAG. T80, G132, E144, and N158 together coordinate N-acetyl-alpha-D-glucosamine 1-phosphate. The linker stretch occupies residues 205-224; that stretch reads GYWNDIGKPWDLLDANTHIL. An N-acetyltransferase region spans residues 225–411; sequence KNIKTDIKGK…EEIIIKTKRK (187 aa). Catalysis depends on H308, which acts as the Proton acceptor. 2 residues coordinate acetyl-CoA: A384 and K401.

It in the N-terminal section; belongs to the N-acetylglucosamine-1-phosphate uridyltransferase family. The protein in the C-terminal section; belongs to the transferase hexapeptide repeat family.

It catalyses the reaction N-acetyl-alpha-D-glucosamine 1-phosphate + UTP + H(+) = UDP-N-acetyl-alpha-D-glucosamine + diphosphate. The enzyme catalyses alpha-D-glucosamine 1-phosphate + acetyl-CoA = N-acetyl-alpha-D-glucosamine 1-phosphate + CoA + H(+). Its pathway is nucleotide-sugar biosynthesis; UDP-N-acetyl-alpha-D-glucosamine biosynthesis; N-acetyl-alpha-D-glucosamine 1-phosphate from alpha-D-glucosamine 6-phosphate (route II): step 2/2. The protein operates within nucleotide-sugar biosynthesis; UDP-N-acetyl-alpha-D-glucosamine biosynthesis; UDP-N-acetyl-alpha-D-glucosamine from N-acetyl-alpha-D-glucosamine 1-phosphate: step 1/1. Functionally, catalyzes the last two sequential reactions in the de novo biosynthetic pathway for UDP-N-acetyl-glucosamine (UDP-GlcNAc). Responsible for the acetylation of GlcN-1-P to GlcNAc-1-P, and for the uridyl transfer from UTP to GlcNAc-1-P, to produce UDP-GlcNAc and pyrophosphate. The sequence is that of Bifunctional protein GlmU from Methanococcus aeolicus (strain ATCC BAA-1280 / DSM 17508 / OCM 812 / Nankai-3).